A 431-amino-acid polypeptide reads, in one-letter code: Enolase (431 aa).

Q167 contacts (2R)-2-phosphoglycerate. E209 acts as the Proton donor in catalysis. Mg(2+)-binding residues include D246, E289, and D316. Positions 341, 370, 371, and 392 each coordinate (2R)-2-phosphoglycerate. K341 serves as the catalytic Proton acceptor.

Belongs to the enolase family. In terms of assembly, component of the RNA degradosome, a multiprotein complex involved in RNA processing and mRNA degradation. The cofactor is Mg(2+).

The protein localises to the cytoplasm. It is found in the secreted. Its subcellular location is the cell surface. It carries out the reaction (2R)-2-phosphoglycerate = phosphoenolpyruvate + H2O. It functions in the pathway carbohydrate degradation; glycolysis; pyruvate from D-glyceraldehyde 3-phosphate: step 4/5. Functionally, catalyzes the reversible conversion of 2-phosphoglycerate (2-PG) into phosphoenolpyruvate (PEP). It is essential for the degradation of carbohydrates via glycolysis. The protein is Enolase of Shewanella oneidensis (strain ATCC 700550 / JCM 31522 / CIP 106686 / LMG 19005 / NCIMB 14063 / MR-1).